The chain runs to 265 residues: MMQELKQSYIKTFDKDDVALSTNDLSVLYGGKVQKLFDASLQFKKNTITALIGASGSGKSTFLRSLNRMNDKVATVNGEIWFHGLDVNKPNINVYELRKSIGMVFQRPNPFPKSIRENIVYALKANGKTDKQELDKIVEESLRAAALWDEVKDKLDKSALALSGGQQQRLCIARALAVQPQILLLDEPASALDPVSTSKLEDTLKQLRSKYTMVMVTHNMQQASRISDYTAFFHLGHVIEYNSTAEIFTNPKGKITEDYIQGSFG.

The 241-residue stretch at 20–260 (LSTNDLSVLY…PKGKITEDYI (241 aa)) folds into the ABC transporter domain. 53–60 (GASGSGKS) is an ATP binding site.

This sequence belongs to the ABC transporter superfamily. Phosphate importer (TC 3.A.1.7) family. As to quaternary structure, the complex is composed of two ATP-binding proteins (PstB), two transmembrane proteins (PstC and PstA) and a solute-binding protein (PstS).

The protein localises to the cell membrane. It carries out the reaction phosphate(out) + ATP + H2O = ADP + 2 phosphate(in) + H(+). Its function is as follows. Part of the ABC transporter complex PstSACB involved in phosphate import. Responsible for energy coupling to the transport system. The polypeptide is Phosphate import ATP-binding protein PstB 1 (Lactobacillus acidophilus (strain ATCC 700396 / NCK56 / N2 / NCFM)).